The sequence spans 473 residues: 3-isopropylmalate dehydratase large subunit (473 aa).

Positions 353, 414, and 417 each coordinate [4Fe-4S] cluster.

This sequence belongs to the aconitase/IPM isomerase family. LeuC type 1 subfamily. In terms of assembly, heterodimer of LeuC and LeuD. The cofactor is [4Fe-4S] cluster.

It carries out the reaction (2R,3S)-3-isopropylmalate = (2S)-2-isopropylmalate. Its pathway is amino-acid biosynthesis; L-leucine biosynthesis; L-leucine from 3-methyl-2-oxobutanoate: step 2/4. Functionally, catalyzes the isomerization between 2-isopropylmalate and 3-isopropylmalate, via the formation of 2-isopropylmaleate. The protein is 3-isopropylmalate dehydratase large subunit of Cellvibrio japonicus (strain Ueda107) (Pseudomonas fluorescens subsp. cellulosa).